A 1143-amino-acid polypeptide reads, in one-letter code: ATP-dependent helicase/deoxyribonuclease subunit B (1143 aa).

A UvrD-like helicase ATP-binding domain is found at M1–T274. Residue G7–T14 participates in ATP binding. Positions Q267 to D565 constitute a UvrD-like helicase C-terminal domain. [4Fe-4S] cluster-binding residues include C782, C1104, C1107, and C1113.

Belongs to the helicase family. AddB/RexB type 1 subfamily. As to quaternary structure, heterodimer of AddA and AddB. Requires Mg(2+) as cofactor. [4Fe-4S] cluster serves as cofactor.

In terms of biological role, the heterodimer acts as both an ATP-dependent DNA helicase and an ATP-dependent, dual-direction single-stranded exonuclease. Recognizes the chi site generating a DNA molecule suitable for the initiation of homologous recombination. The AddB subunit has 5' -&gt; 3' nuclease activity but not helicase activity. In Exiguobacterium sibiricum (strain DSM 17290 / CCUG 55495 / CIP 109462 / JCM 13490 / 255-15), this protein is ATP-dependent helicase/deoxyribonuclease subunit B.